We begin with the raw amino-acid sequence, 567 residues long: Proline--tRNA ligase (567 aa).

The protein belongs to the class-II aminoacyl-tRNA synthetase family. ProS type 1 subfamily. As to quaternary structure, homodimer.

The protein resides in the cytoplasm. The enzyme catalyses tRNA(Pro) + L-proline + ATP = L-prolyl-tRNA(Pro) + AMP + diphosphate. Its function is as follows. Catalyzes the attachment of proline to tRNA(Pro) in a two-step reaction: proline is first activated by ATP to form Pro-AMP and then transferred to the acceptor end of tRNA(Pro). As ProRS can inadvertently accommodate and process non-cognate amino acids such as alanine and cysteine, to avoid such errors it has two additional distinct editing activities against alanine. One activity is designated as 'pretransfer' editing and involves the tRNA(Pro)-independent hydrolysis of activated Ala-AMP. The other activity is designated 'posttransfer' editing and involves deacylation of mischarged Ala-tRNA(Pro). The misacylated Cys-tRNA(Pro) is not edited by ProRS. In Geobacillus sp. (strain WCH70), this protein is Proline--tRNA ligase.